We begin with the raw amino-acid sequence, 482 residues long: UDP-N-acetylmuramoyl-L-alanyl-D-glutamate--2,6-diaminopimelate ligase (482 aa).

Ser24 serves as a coordination point for UDP-N-acetyl-alpha-D-muramoyl-L-alanyl-D-glutamate. 105-111 (GTNGKTT) provides a ligand contact to ATP. Residues 147–148 (TT), Ser174, Gln180, and Arg182 each bind UDP-N-acetyl-alpha-D-muramoyl-L-alanyl-D-glutamate. An N6-carboxylysine modification is found at Lys214. Residues Arg378, 402-405 (DNPR), Gly453, and Glu457 contribute to the meso-2,6-diaminopimelate site. The short motif at 402-405 (DNPR) is the Meso-diaminopimelate recognition motif element.

It belongs to the MurCDEF family. MurE subfamily. It depends on Mg(2+) as a cofactor. Carboxylation is probably crucial for Mg(2+) binding and, consequently, for the gamma-phosphate positioning of ATP.

The protein localises to the cytoplasm. The enzyme catalyses UDP-N-acetyl-alpha-D-muramoyl-L-alanyl-D-glutamate + meso-2,6-diaminopimelate + ATP = UDP-N-acetyl-alpha-D-muramoyl-L-alanyl-gamma-D-glutamyl-meso-2,6-diaminopimelate + ADP + phosphate + H(+). It functions in the pathway cell wall biogenesis; peptidoglycan biosynthesis. Functionally, catalyzes the addition of meso-diaminopimelic acid to the nucleotide precursor UDP-N-acetylmuramoyl-L-alanyl-D-glutamate (UMAG) in the biosynthesis of bacterial cell-wall peptidoglycan. The chain is UDP-N-acetylmuramoyl-L-alanyl-D-glutamate--2,6-diaminopimelate ligase from Lawsonia intracellularis (strain PHE/MN1-00).